Here is a 76-residue protein sequence, read N- to C-terminus: U1-cyrtautoxin-As1b (76 aa).

4 disulfide bridges follow: Cys23–Cys37, Cys30–Cys51, Cys36–Cys66, and Cys69–Cys76.

Belongs to the neurotoxin 21 family. Expressed by the venom gland.

The protein resides in the secreted. Its function is as follows. Neurotoxin with probable ion channel impairing activity. Is both paralytic and lethal, when injected into lepidopteran larvae. In Apomastus schlingeri (Trap-door spider), this protein is U1-cyrtautoxin-As1b.